The chain runs to 569 residues: Proline--tRNA ligase (569 aa).

The protein belongs to the class-II aminoacyl-tRNA synthetase family. ProS type 1 subfamily. As to quaternary structure, homodimer.

The protein localises to the cytoplasm. The catalysed reaction is tRNA(Pro) + L-proline + ATP = L-prolyl-tRNA(Pro) + AMP + diphosphate. Functionally, catalyzes the attachment of proline to tRNA(Pro) in a two-step reaction: proline is first activated by ATP to form Pro-AMP and then transferred to the acceptor end of tRNA(Pro). As ProRS can inadvertently accommodate and process non-cognate amino acids such as alanine and cysteine, to avoid such errors it has two additional distinct editing activities against alanine. One activity is designated as 'pretransfer' editing and involves the tRNA(Pro)-independent hydrolysis of activated Ala-AMP. The other activity is designated 'posttransfer' editing and involves deacylation of mischarged Ala-tRNA(Pro). The misacylated Cys-tRNA(Pro) is not edited by ProRS. This chain is Proline--tRNA ligase, found in Campylobacter jejuni subsp. jejuni serotype O:23/36 (strain 81-176).